The following is a 104-amino-acid chain: Large ribosomal subunit protein uL24 (104 aa).

This sequence belongs to the universal ribosomal protein uL24 family. As to quaternary structure, part of the 50S ribosomal subunit.

One of two assembly initiator proteins, it binds directly to the 5'-end of the 23S rRNA, where it nucleates assembly of the 50S subunit. In terms of biological role, one of the proteins that surrounds the polypeptide exit tunnel on the outside of the subunit. This chain is Large ribosomal subunit protein uL24, found in Proteus mirabilis (strain HI4320).